Consider the following 185-residue polypeptide: CASP-like protein 2C2 (185 aa).

At 1 to 22 (MAAAARVSEVKAEGLLRGACTA) the chain is on the cytoplasmic side. Residues 23 to 43 (LAAAAALLVGLSTQTETVLLV) traverse the membrane as a helical segment. Over 44 to 53 (RKKATVKDVQ) the chain is Extracellular. The chain crosses the membrane as a helical span at residues 54-74 (ALWVLAMAAAAAAGYHLLQLL). The Cytoplasmic segment spans residues 75 to 104 (KCLYLGRVGGARPCRRSSRALAWTCLLLDK). The helical transmembrane segment at 105-125 (ACAYTTFATTVAAAQACVVAL) threads the bilayer. At 126-146 (DGAHALQWTKLCNIYTRFCEQ) the chain is on the extracellular side. A helical transmembrane segment spans residues 147–167 (VAGSLVLGMLAAVGTAVLSAA). Over 168–185 (SARNVFRHYASLETYAAH) the chain is Cytoplasmic.

This sequence belongs to the Casparian strip membrane proteins (CASP) family. Homodimer and heterodimers.

The protein localises to the cell membrane. This is CASP-like protein 2C2 from Zea mays (Maize).